Here is an 82-residue protein sequence, read N- to C-terminus: Small ribosomal subunit protein bS18 (82 aa).

Belongs to the bacterial ribosomal protein bS18 family. In terms of assembly, part of the 30S ribosomal subunit. Forms a tight heterodimer with protein bS6.

Functionally, binds as a heterodimer with protein bS6 to the central domain of the 16S rRNA, where it helps stabilize the platform of the 30S subunit. The chain is Small ribosomal subunit protein bS18 from Chlamydia pneumoniae (Chlamydophila pneumoniae).